A 440-amino-acid polypeptide reads, in one-letter code: Xylose isomerase (440 aa).

D307 and D309 together coordinate Mg(2+).

The protein belongs to the xylose isomerase family. In terms of assembly, homotetramer. Requires Mg(2+) as cofactor.

It localises to the cytoplasm. It catalyses the reaction alpha-D-xylose = alpha-D-xylulofuranose. The polypeptide is Xylose isomerase (Pectobacterium carotovorum subsp. carotovorum (strain PC1)).